The sequence spans 177 residues: Bifunctional protein PyrR (177 aa).

Residues 99-111 (VVLVDDVIYKGRT) carry the PRPP-binding motif.

The protein belongs to the purine/pyrimidine phosphoribosyltransferase family. PyrR subfamily.

It carries out the reaction UMP + diphosphate = 5-phospho-alpha-D-ribose 1-diphosphate + uracil. Its function is as follows. Regulates the transcription of the pyrimidine nucleotide (pyr) operon in response to exogenous pyrimidines. In terms of biological role, also displays a weak uracil phosphoribosyltransferase activity which is not physiologically significant. This Gloeothece citriformis (strain PCC 7424) (Cyanothece sp. (strain PCC 7424)) protein is Bifunctional protein PyrR.